The following is a 42-amino-acid chain: Gastric inhibitory polypeptide (42 aa).

This sequence belongs to the glucagon family.

The protein localises to the secreted. Functionally, potent stimulator of insulin secretion and relatively poor inhibitor of gastric acid secretion. This chain is Gastric inhibitory polypeptide (GIP), found in Bos taurus (Bovine).